Consider the following 661-residue polypeptide: UvrABC system protein B (661 aa).

The Helicase ATP-binding domain maps to Ala-25 to Pro-414. Gly-38–Thr-45 lines the ATP pocket. Positions Tyr-91–Ile-114 match the Beta-hairpin motif. The 163-residue stretch at Gln-430–Ile-592 folds into the Helicase C-terminal domain. Residues Lys-621–Ala-656 form the UVR domain.

It belongs to the UvrB family. Forms a heterotetramer with UvrA during the search for lesions. Interacts with UvrC in an incision complex.

The protein localises to the cytoplasm. Functionally, the UvrABC repair system catalyzes the recognition and processing of DNA lesions. A damage recognition complex composed of 2 UvrA and 2 UvrB subunits scans DNA for abnormalities. Upon binding of the UvrA(2)B(2) complex to a putative damaged site, the DNA wraps around one UvrB monomer. DNA wrap is dependent on ATP binding by UvrB and probably causes local melting of the DNA helix, facilitating insertion of UvrB beta-hairpin between the DNA strands. Then UvrB probes one DNA strand for the presence of a lesion. If a lesion is found the UvrA subunits dissociate and the UvrB-DNA preincision complex is formed. This complex is subsequently bound by UvrC and the second UvrB is released. If no lesion is found, the DNA wraps around the other UvrB subunit that will check the other stand for damage. This chain is UvrABC system protein B, found in Rickettsia conorii (strain ATCC VR-613 / Malish 7).